Here is a 179-residue protein sequence, read N- to C-terminus: MGILFTRIWRLFNHQEHKVIIVGLDNAGKTTILYQFSMNEVVHTSPTIGSNVEEIVINNTRFLMWDIGGQESLRSSWNTYYTNTEFVIVVVDSTDRERISVTREELYKMLAHEDLRKAGLLIFANKQDVKECMTVAEISQFLKLTSIKDHQWHIQACCALTGEGLCQGLEWMMSRLKIR.

Residue Gly2 is the site of N-myristoyl glycine attachment. GTP contacts are provided by residues 23-30, 66-70, 125-128, and Ala159; these read GLDNAGKT, DIGGQ, and NKQD.

It belongs to the small GTPase superfamily. Arf family.

Lacks ADP-ribosylation enhancing activity. This is ADP-ribosylation factor-like protein 5A (ARL5A) from Homo sapiens (Human).